A 1214-amino-acid polypeptide reads, in one-letter code: Receptor-type guanylate cyclase gcy-19 (1214 aa).

The signal sequence occupies residues 1–18; it reads MEHLIFLLIFGGYSPSIA. Over 19 to 517 the chain is Extracellular; that stretch reads QITSSTTTTT…PQTFVDQYGA (499 aa). N-linked (GlcNAc...) asparagine glycans are attached at residues Asn-85, Asn-363, Asn-441, and Asn-464. A helical membrane pass occupies residues 518–538; sequence LVFSIGGVLALAMLFLITCFF. Residues 539-1214 lie on the Cytoplasmic side of the membrane; that stretch reads YVLRQRKLER…FRRQETLALM (676 aa). A Protein kinase domain is found at 572-859; sequence RMSKRSIQSG…KGNLMDHVFN (288 aa). The Guanylate cyclase domain maps to 917–1047; it reads TVFFSDVVKF…DTVNTASRME (131 aa). The disordered stretch occupies residues 1116–1197; it reads NSSNMAYNPE…EKAREIHNEE (82 aa). Residues 1133 to 1142 are compositionally biased toward acidic residues; that stretch reads DDEDVDDESS. Residues 1186-1197 are compositionally biased toward basic and acidic residues; the sequence is LEEKAREIHNEE.

The protein belongs to the adenylyl cyclase class-4/guanylyl cyclase family. As to expression, expressed asymmetrically in ASE right (ASER) sensory neuron.

It localises to the cell membrane. The catalysed reaction is GTP = 3',5'-cyclic GMP + diphosphate. In terms of biological role, guanylate cyclase involved in the production of the second messenger cGMP. The sequence is that of Receptor-type guanylate cyclase gcy-19 from Caenorhabditis briggsae.